The following is a 252-amino-acid chain: Probable transcriptional regulatory protein Cagg_2594 (252 aa).

Positions 1-14 (MSGHSKWHTIRRAK) are enriched in basic residues. The tract at residues 1–22 (MSGHSKWHTIRRAKSANDQRRG) is disordered.

The protein belongs to the TACO1 family.

It is found in the cytoplasm. The polypeptide is Probable transcriptional regulatory protein Cagg_2594 (Chloroflexus aggregans (strain MD-66 / DSM 9485)).